The sequence spans 413 residues: RNA-binding protein 41 (413 aa).

The segment covering 223–235 has biased composition (polar residues); sequence SVGDSGTAESPSL. The interval 223–247 is disordered; it reads SVGDSGTAESPSLLQDKGKQAAQGK. A Phosphoserine modification is found at Ser-232. The region spanning 309–387 is the RRM domain; it reads KVLYLKNLSP…KILVIEFGKN (79 aa).

Its function is as follows. May bind RNA. The chain is RNA-binding protein 41 (RBM41) from Homo sapiens (Human).